Here is a 90-residue protein sequence, read N- to C-terminus: U7-theraphotoxin-Hhn1c (90 aa).

The N-terminal stretch at M1–S19 is a signal peptide. Residues F20–E50 constitute a propeptide that is removed on maturation. Intrachain disulfides connect C51–C65, C58–C70, and C64–C81.

Belongs to the neurotoxin 10 (Hwtx-1) family. 13 (Hntx-13) subfamily. In terms of tissue distribution, expressed by the venom gland.

It is found in the secreted. Functionally, ion channel inhibitor. The sequence is that of U7-theraphotoxin-Hhn1c from Cyriopagopus hainanus (Chinese bird spider).